The following is a 318-amino-acid chain: METRYNLKSPAVKRLMKEAAELKDPTDHYHAQPLEDNLFEWHFTVRGPPDSDFDGGVYHGRIVLPPEYPMKPPSIILLTANGRFEVGKKICLSISGHHPETWQPSWSIRTALLAIIGFMPTKGEGAIGSLDYTPEERRALAKKSQDFCCEGCGSAMKDVLLPLKSGSDSSQADQEAKELARQISFKAEVNSSGKTISESDLNHSFSLTDLQDDIPTTFQGATASTSYGLQNSSAASFHQPTQPVAKNTSMSPRQRRAQQQSQRRLSTSPDVIQGHQPRDNHTDHGGSAVLIVILTLALAALIFRRIYLANEYIFDFEL.

Topologically, residues 1–282 (METRYNLKSP…QGHQPRDNHT (282 aa)) are cytoplasmic. The UBC core domain maps to 10 to 160 (PAVKRLMKEA…GCGSAMKDVL (151 aa)). The active-site Glycyl thioester intermediate is the C91. S184 is subject to Phosphoserine; by MAPKAPK2. Positions 229–248 (LQNSSAASFHQPTQPVAKNT) are enriched in polar residues. A disordered region spans residues 229 to 283 (LQNSSAASFHQPTQPVAKNTSMSPRQRRAQQQSQRRLSTSPDVIQGHQPRDNHTD). Residues 249-268 (SMSPRQRRAQQQSQRRLSTS) show a composition bias toward low complexity. S266 and S268 each carry phosphoserine. The helical; Anchor for type IV membrane protein transmembrane segment at 283 to 303 (DHGGSAVLIVILTLALAALIF) threads the bilayer. The Lumenal segment spans residues 304–318 (RRIYLANEYIFDFEL).

It belongs to the ubiquitin-conjugating enzyme family. Component of the HRD1 complex, which comprises at least SYNV1/HRD1, DERL1/2, FAM8A1, HERPUD1/HERP, OS9, SEL1L and UBE2J1. Interacts with E3 ligase RNF26. Interacts with E3 ligase RNF133. In terms of processing, phosphorylated at Ser-184 in a cytosolic stress-dependent manner by MAP kinase p38 MAPKAPK2. Phosphorylated UBE2J1 is rapidly ubiquitinated and subsequently degraded by the proteasome. Expressed in testes.

The protein localises to the endoplasmic reticulum membrane. It catalyses the reaction S-ubiquitinyl-[E1 ubiquitin-activating enzyme]-L-cysteine + [E2 ubiquitin-conjugating enzyme]-L-cysteine = [E1 ubiquitin-activating enzyme]-L-cysteine + S-ubiquitinyl-[E2 ubiquitin-conjugating enzyme]-L-cysteine.. Its pathway is protein modification; protein ubiquitination. In terms of biological role, catalyzes the covalent attachment of ubiquitin to other proteins. Functions in the selective degradation of misfolded membrane proteins from the endoplasmic reticulum (ERAD) and is essential for cells to recover from ER stress. Plays a role in MAPKAPK2-dependent translational control of TNF-alpha synthesis. Also acts as a platform for perinuclear positioning of the endosomal system by mediating ubiquitination of SQSTM1 through interaction with the E3 ubiquitin-protein ligase RNF26. Plays a role in male fecundity through the interaction with the E3 ubiquitin-protein ligase RNF133. (Microbial infection) Promotes Dengue virus RNA replication by negatively regulating IFN-beta signaling and mediating 'Lys-48'-linked ubiquitination on IRF3. This chain is Ubiquitin-conjugating enzyme E2 J1, found in Homo sapiens (Human).